A 500-amino-acid polypeptide reads, in one-letter code: Bifunctional protein GlmU (500 aa).

The interval 1-242 (MPVQTAVVVL…SAKVAGANDR (242 aa)) is pyrophosphorylase. UDP-N-acetyl-alpha-D-glucosamine contacts are provided by residues 10-13 (LAAG), Lys24, Gln81, and 86-87 (GT). Residue Asp112 coordinates Mg(2+). Gly151, Glu167, Asn182, and Asn240 together coordinate UDP-N-acetyl-alpha-D-glucosamine. Asn240 provides a ligand contact to Mg(2+). Positions 243 to 263 (VQLSRLAAELNRRTVENWMRA) are linker. Positions 264–500 (GVTVVDPSTT…KQDLKDGIEQ (237 aa)) are N-acetyltransferase. Residues Arg345 and Lys363 each coordinate UDP-N-acetyl-alpha-D-glucosamine. The active-site Proton acceptor is His375. Residues Tyr378 and Asn389 each coordinate UDP-N-acetyl-alpha-D-glucosamine. Residues Ala392, 398–399 (NY), Ser417, and Ala435 each bind acetyl-CoA. The interval 472–500 (AEAAAAAGLHHSSDLHETEKQDLKDGIEQ) is disordered. Positions 482 to 500 (HSSDLHETEKQDLKDGIEQ) are enriched in basic and acidic residues.

The protein in the N-terminal section; belongs to the N-acetylglucosamine-1-phosphate uridyltransferase family. It in the C-terminal section; belongs to the transferase hexapeptide repeat family. As to quaternary structure, homotrimer. Mg(2+) is required as a cofactor.

It localises to the cytoplasm. It catalyses the reaction alpha-D-glucosamine 1-phosphate + acetyl-CoA = N-acetyl-alpha-D-glucosamine 1-phosphate + CoA + H(+). It carries out the reaction N-acetyl-alpha-D-glucosamine 1-phosphate + UTP + H(+) = UDP-N-acetyl-alpha-D-glucosamine + diphosphate. Its pathway is nucleotide-sugar biosynthesis; UDP-N-acetyl-alpha-D-glucosamine biosynthesis; N-acetyl-alpha-D-glucosamine 1-phosphate from alpha-D-glucosamine 6-phosphate (route II): step 2/2. It functions in the pathway nucleotide-sugar biosynthesis; UDP-N-acetyl-alpha-D-glucosamine biosynthesis; UDP-N-acetyl-alpha-D-glucosamine from N-acetyl-alpha-D-glucosamine 1-phosphate: step 1/1. It participates in bacterial outer membrane biogenesis; LPS lipid A biosynthesis. Functionally, catalyzes the last two sequential reactions in the de novo biosynthetic pathway for UDP-N-acetylglucosamine (UDP-GlcNAc). The C-terminal domain catalyzes the transfer of acetyl group from acetyl coenzyme A to glucosamine-1-phosphate (GlcN-1-P) to produce N-acetylglucosamine-1-phosphate (GlcNAc-1-P), which is converted into UDP-GlcNAc by the transfer of uridine 5-monophosphate (from uridine 5-triphosphate), a reaction catalyzed by the N-terminal domain. The chain is Bifunctional protein GlmU from Rhodococcus jostii (strain RHA1).